A 443-amino-acid polypeptide reads, in one-letter code: Phosphoglucosamine mutase (443 aa).

Residue Ser-101 is the Phosphoserine intermediate of the active site. Mg(2+) is bound by residues Ser-101, Asp-240, Asp-242, and Asp-244. A Phosphoserine modification is found at Ser-101.

This sequence belongs to the phosphohexose mutase family. Mg(2+) is required as a cofactor. In terms of processing, activated by phosphorylation.

The enzyme catalyses alpha-D-glucosamine 1-phosphate = D-glucosamine 6-phosphate. In terms of biological role, catalyzes the conversion of glucosamine-6-phosphate to glucosamine-1-phosphate. The sequence is that of Phosphoglucosamine mutase from Psychromonas ingrahamii (strain DSM 17664 / CCUG 51855 / 37).